Consider the following 328-residue polypeptide: Urokinase plasminogen activator surface receptor (328 aa).

The signal sequence occupies residues 1-24 (MGLLRRRLLLLVVVVTTCVPASQG). UPAR/Ly6 domains lie at 25–118 (LRCI…GRYL), 118–213 (LECA…PPNG), and 214–299 (FQCY…RPTG). Cystine bridges form between Cys-27–Cys-48, Cys-30–Cys-36, and Cys-41–Cys-69. Asn-76 carries N-linked (GlcNAc...) asparagine glycosylation. 11 cysteine pairs are disulfide-bonded: Cys-95-Cys-100, Cys-120-Cys-147, Cys-123-Cys-130, Cys-140-Cys-169, Cys-175-Cys-192, Cys-193-Cys-198, Cys-216-Cys-244, Cys-219-Cys-227, Cys-237-Cys-263, Cys-269-Cys-288, and Cys-289-Cys-294. N-linked (GlcNAc...) asparagine glycosylation is found at Asn-184, Asn-194, Asn-222, Asn-255, Asn-283, and Asn-290. Gly-299 is lipidated: GPI-anchor amidated glycine. The propeptide at 300–328 (GAPGPGPAHLILIASLLLTLRLWGIPLWT) is removed in mature form.

Monomer. Interacts (via the UPAR/Ly6 domains) with SRPX2. Interacts with MRC2. Interacts with SORL1 (via N-terminal ectodomain); this interaction decreases PLAUR internalization. The ternary complex composed of PLAUR-PLAU-SERPINE1 also interacts with SORL1. Interacts with CD82; this interaction prevents PLAUR from binding to its high affinity ligand PLAU.

The protein localises to the cell membrane. The protein resides in the secreted. Acts as a receptor for urokinase plasminogen activator. Plays a role in localizing and promoting plasmin formation. Mediates the proteolysis-independent signal transduction activation effects of U-PA. This chain is Urokinase plasminogen activator surface receptor (Plaur), found in Rattus norvegicus (Rat).